The primary structure comprises 76 residues: Small ribosomal subunit protein uS17 (76 aa).

It belongs to the universal ribosomal protein uS17 family. As to quaternary structure, part of the 30S ribosomal subunit.

One of the primary rRNA binding proteins, it binds specifically to the 5'-end of 16S ribosomal RNA. The sequence is that of Small ribosomal subunit protein uS17 from Anaplasma phagocytophilum (strain HZ).